Consider the following 107-residue polypeptide: SH3 domain-binding glutamic acid-rich-like protein 2 (107 aa).

The SH3-binding signature appears at 61-67 (QGNPLPP).

This sequence belongs to the SH3BGR family.

It is found in the nucleus. The sequence is that of SH3 domain-binding glutamic acid-rich-like protein 2 (Sh3bgrl2) from Mus musculus (Mouse).